Reading from the N-terminus, the 449-residue chain is Exodeoxyribonuclease 7 large subunit (449 aa).

This sequence belongs to the XseA family. Heterooligomer composed of large and small subunits.

Its subcellular location is the cytoplasm. It carries out the reaction Exonucleolytic cleavage in either 5'- to 3'- or 3'- to 5'-direction to yield nucleoside 5'-phosphates.. In terms of biological role, bidirectionally degrades single-stranded DNA into large acid-insoluble oligonucleotides, which are then degraded further into small acid-soluble oligonucleotides. The chain is Exodeoxyribonuclease 7 large subunit from Salmonella newport (strain SL254).